The following is a 194-amino-acid chain: uncharacterized protein (194 aa).

A signal peptide spans 1 to 29; it reads MKKAFLVFLSVVLVTTVFLVKQQESVAQA. Positions 104–131 form a coiled coil; the sequence is KVDELLKKAGQIVEEKVEAAKEIAASKD. Residues 149–171 form a helical membrane-spanning segment; that stretch reads YFYYVSYVAAAGALILIILAIDI.

It localises to the membrane. This is an uncharacterized protein from Bacillus subtilis (strain 168).